The sequence spans 297 residues: Tyrosine recombinase XerD (297 aa).

One can recognise a Core-binding (CB) domain in the interval Met1–Tyr86. Residues Arg107–Glu291 form the Tyr recombinase domain. Active-site residues include Arg147, Lys171, His243, Arg246, and His269. Catalysis depends on Tyr278, which acts as the O-(3'-phospho-DNA)-tyrosine intermediate.

Belongs to the 'phage' integrase family. XerD subfamily. Forms a cyclic heterotetrameric complex composed of two molecules of XerC and two molecules of XerD.

The protein resides in the cytoplasm. In terms of biological role, site-specific tyrosine recombinase, which acts by catalyzing the cutting and rejoining of the recombining DNA molecules. The XerC-XerD complex is essential to convert dimers of the bacterial chromosome into monomers to permit their segregation at cell division. It also contributes to the segregational stability of plasmids. The chain is Tyrosine recombinase XerD from Pasteurella multocida (strain Pm70).